Reading from the N-terminus, the 399-residue chain is Telomeric repeat-binding factor 2-interacting protein 1 (399 aa).

An N-acetylalanine modification is found at A2. A phosphoserine mark is found at S36 and S43. The 24-residue stretch at 78-101 (FISTQYILDCVERNERLELEAYRL) folds into the BRCT domain. Residues 104-132 (ASAADTGSEAKPGALAEGAAEPEPQRHAG) are disordered. Low complexity predominate over residues 112 to 125 (EAKPGALAEGAAEP). A Glycyl lysine isopeptide (Lys-Gly) (interchain with G-Cter in SUMO2) cross-link involves residue K114. One can recognise a Myb-like domain in the interval 128–188 (QRHAGRIAFT…SLKDRYLKHL (61 aa)). S154 and S156 each carry phosphoserine. A Glycyl lysine isopeptide (Lys-Gly) (interchain with G-Cter in SUMO2) cross-link involves residue K194. Disordered stretches follow at residues 196–244 (LLGD…EEIQ) and 264–311 (VVVD…QPEV). Phosphoserine is present on residues S203 and S206. Residues K208, K212, and K240 each participate in a glycyl lysine isopeptide (Lys-Gly) (interchain with G-Cter in SUMO2) cross-link. Residues 280-304 (CDDDPPTPEEDSETQPDEEEEEEEE) show a composition bias toward acidic residues. K372 is covalently cross-linked (Glycyl lysine isopeptide (Lys-Gly) (interchain with G-Cter in SUMO2)). A Nuclear localization signal motif is present at residues 383-399 (KKFGAQNVARRIEFRKK).

Belongs to the RAP1 family. Associates with the I-kappa-B-kinase (IKK) core complex, composed of CHUK, IKBKB and IKBKG. Homodimer. Component of the shelterin complex (telosome) composed of TERF1, TERF2, TINF2, TERF2IP ACD and POT1. Interacts with TERF2; the interaction is direct. Does not interact with TERF1. Interacts with SLX4/BTBD12. As to expression, ubiquitous. Highly expressed.

It localises to the nucleus. The protein resides in the cytoplasm. The protein localises to the chromosome. It is found in the telomere. Its function is as follows. Acts both as a regulator of telomere function and as a transcription regulator. Involved in the regulation of telomere length and protection as a component of the shelterin complex (telosome). In contrast to other components of the shelterin complex, it is dispensible for telomere capping and does not participate in the protection of telomeres against non-homologous end-joining (NHEJ)-mediated repair. Instead, it is required to negatively regulate telomere recombination and is essential for repressing homology-directed repair (HDR), which can affect telomere length. Does not bind DNA directly: recruited to telomeric double-stranded 5'-TTAGGG-3' repeats via its interaction with TERF2. Independently of its function in telomeres, also acts as a transcription regulator: recruited to extratelomeric 5'-TTAGGG-3' sites via its association with TERF2 or other factors, and regulates gene expression. When cytoplasmic, associates with the I-kappa-B-kinase (IKK) complex and acts as a regulator of the NF-kappa-B signaling by promoting IKK-mediated phosphorylation of RELA/p65, leading to activate expression of NF-kappa-B target genes. This chain is Telomeric repeat-binding factor 2-interacting protein 1 (TERF2IP), found in Homo sapiens (Human).